Here is an 865-residue protein sequence, read N- to C-terminus: V-type proton ATPase 116 kDa subunit a 3 (865 aa).

At 1–409 (MGSIYRSEHM…VNPAPWTIIS (409 aa)) the chain is on the cytoplasmic side. Positions 51 to 121 (FVNEVRRCDE…NKNCKVLKNN (71 aa)) form a coiled coil. Residues 410-430 (FPFLFAVMFGDAGHGIIMLIA) traverse the membrane as a helical segment. The Extracellular segment spans residues 431 to 453 (ASAFVIFEKKLISMKIKDEIFNT). The chain crosses the membrane as a helical span at residues 454-474 (FFGGRYVVLLMGMFAIYTGFI). Residues 475–556 (YNDFYSKSVN…FLNPMKMKTS (82 aa)) lie on the Cytoplasmic side of the membrane. The chain crosses the membrane as a helical span at residues 557-577 (ILLGISQMAFGIMLSLMNHIG). N-linked (GlcNAc...) asparagine glycosylation is present at Asn-578. The Extracellular segment spans residues 578–583 (NRSVVD). Residues 584 to 604 (IVFVFIPQCLFLGCIFVYLCL) traverse the membrane as a helical segment. Topologically, residues 605–623 (QVLMKWIFFYVKPAYIFGR) are cytoplasmic. A helical membrane pass occupies residues 624–644 (LYPGSNCAPSLLIGLINMFMV). Residues 645 to 688 (KSRDASFAHDVGTAAGKEWVIVNGQNVTYTINDQCYLQQWYPNQ) lie on the Extracellular side of the membrane. N-linked (GlcNAc...) asparagine glycans are attached at residues Asn-670 and Asn-687. A helical membrane pass occupies residues 689 to 709 (SLVELILLLIAVVSVPVMLLV). Residues 710-798 (KPFYIRWRHS…LTMGGWGGSA (89 aa)) lie on the Cytoplasmic side of the membrane. Residues 799–819 (AITILFYFIFSILSVCILILM) traverse the membrane as a helical segment. Over 820–865 (EGLSAFLHAIRLHWVEFQSKFYGGTGIQFEPFCFTKIIRVYEGLDQ) the chain is Extracellular.

Belongs to the V-ATPase 116 kDa subunit family. In terms of assembly, V-ATPase is a heteromultimeric enzyme made up of two complexes: the ATP-hydrolytic V1 complex and the proton translocation V0 complex. The V1 complex consists of three catalytic AB heterodimers that form a heterohexamer, three peripheral stalks each consisting of EG heterodimers, one central rotor including subunits D and F, and the regulatory subunits C and H. The proton translocation complex V0 consists of the proton transport subunit a, a ring of proteolipid subunits c9c'', rotary subunit d, subunits e and f, and the accessory subunits vah-19/Ac45 and vah-20/PRR. Interacts with V-type proton ATPase subunit C vha-11.

The protein localises to the apical cell membrane. Subunit of the V0 complex of vacuolar(H+)-ATPase (V-ATPase), a multisubunit enzyme composed of a peripheral complex (V1) that hydrolyzes ATP and a membrane integral complex (V0) that translocates protons. V-ATPase is responsible for acidifying and maintaining the pH of intracellular compartments and in some cell types, is targeted to the plasma membrane, where it is responsible for acidifying the extracellular environment. In the intestine, required for the rhythmic defecation behavior by promoting acidification in the gut lumen following defecation. Also, luminal acidification is required for nutrient uptake. This chain is V-type proton ATPase 116 kDa subunit a 3, found in Caenorhabditis elegans.